The chain runs to 132 residues: Dehydratase CTB10 (132 aa).

The EthD domain maps to 21 to 117; the sequence is PDQSEEDHHN…IPDHFNFADM (97 aa).

Belongs to the tpcK family.

It participates in mycotoxin biosynthesis. Dehydratase; part of the gene cluster that mediates the biosynthesis of cercosporin, a light-activated, non-host-selective toxin. The perylenequinone chromophore of cercosporin absorbs light energy to attain an electronically-activated triplet state and produces active oxygen species such as the hydroxyl radical, superoxide, hydrogen peroxide or singlet oxygen upon reaction with oxygen molecules. These reactive oxygen species cause damage to various cellular components including lipids, proteins and nucleic acids. The first step of cercosporin biosynthesis is performed by the polyketide synthase CTB1 which catalyzes the formation of nor-toralactone. The starter unit acyltransferase (SAT) domain of CTB1 initiates polyketide extension by the selective utilization of acetyl-CoA, which is elongated to the heptaketide in the beta-ketoacyl synthase (KS) domain by successive condensations with six malonyl units introduced by the malonyl acyltransferase (MAT) domain. The product template (PT) domain catalyzes C4-C9 and C2-C11 aldol cyclizations and dehydrations to a trihydroxynaphthalene, which is thought to be delivered to the thioesterase (TE) domain for product release. The bifunctional enzyme CTB3 then methylates nor-toralactone to toralactone before conducting an unusual oxidative aromatic ring opening. The O-methyltransferase CTB2 further methylates the nascent OH-6 of the CBT3 product, blocking further oxidation at this site before the reductase CTB6 reduces the 2-oxopropyl ketone at position C7, giving naphthalene. The FAD-dependent monooxygenase CTB5 in concert with the multicopper oxidase CTB12 are responsible for homodimerization of naphthalene with CTB7 installing the dioxepine moiety, finally producing cercosporin. The fasciclin domain-containing protein CTB11 might act with CTB5 and CTB12 whereas the roles of CTB9 and CTB10 have still to be elucidated. This Cercospora beticola (Sugarbeet leaf spot fungus) protein is Dehydratase CTB10.